We begin with the raw amino-acid sequence, 703 residues long: Elongation factor G 1 (703 aa).

A tr-type G domain is found at 8 to 290 (ERYRNIGISA…AVIDFLPSPV (283 aa)). Residues 17-24 (AHIDAGKT), 88-92 (DTPGH), and 142-145 (NKMD) each bind GTP.

Belongs to the TRAFAC class translation factor GTPase superfamily. Classic translation factor GTPase family. EF-G/EF-2 subfamily.

It localises to the cytoplasm. Its function is as follows. Catalyzes the GTP-dependent ribosomal translocation step during translation elongation. During this step, the ribosome changes from the pre-translocational (PRE) to the post-translocational (POST) state as the newly formed A-site-bound peptidyl-tRNA and P-site-bound deacylated tRNA move to the P and E sites, respectively. Catalyzes the coordinated movement of the two tRNA molecules, the mRNA and conformational changes in the ribosome. This is Elongation factor G 1 from Cupriavidus metallidurans (strain ATCC 43123 / DSM 2839 / NBRC 102507 / CH34) (Ralstonia metallidurans).